Reading from the N-terminus, the 149-residue chain is Large ribosomal subunit protein uL13 (149 aa).

This sequence belongs to the universal ribosomal protein uL13 family. Part of the 50S ribosomal subunit.

Functionally, this protein is one of the early assembly proteins of the 50S ribosomal subunit, although it is not seen to bind rRNA by itself. It is important during the early stages of 50S assembly. The sequence is that of Large ribosomal subunit protein uL13 from Cyanothece sp. (strain PCC 7425 / ATCC 29141).